The primary structure comprises 501 residues: Aldehyde dehydrogenase 1A1 (501 aa).

Position 2 is an N-acetylserine (serine 2). Residues lysine 91 and lysine 128 each carry the N6-acetyllysine modification. NAD(+) is bound by residues 167–170 (LPWN), 193–196 (KPAE), 226–227 (GP), and 246–247 (GS). N6-acetyllysine is present on lysine 252. Glutamate 269 functions as the Proton acceptor in the catalytic mechanism. 269–271 (ELG) serves as a coordination point for NAD(+). Residue cysteine 303 is the Nucleophile of the active site. Residues 336-501 (LTPGVSQGPQ…VTVKISQKNS (166 aa)) are mediates interaction with PRMT3. Threonine 337 is modified (phosphothreonine). Residue 349–353 (EQYDK) participates in NAD(+) binding. N6-acetyllysine is present on residues lysine 353 and lysine 367. 400 to 402 (EIF) is an NAD(+) binding site. An N6-acetyllysine modification is found at lysine 410. Serine 413 is subject to Phosphoserine. An N6-acetyllysine mark is found at lysine 419, lysine 435, and lysine 495.

The protein belongs to the aldehyde dehydrogenase family. As to quaternary structure, homotetramer. Interacts with PRMT3; the interaction is direct, inhibits ALDH1A1 aldehyde dehydrogenase activity and is independent of the methyltransferase activity of PRMT3. In terms of processing, the N-terminus is blocked most probably by acetylation.

It localises to the cytoplasm. Its subcellular location is the cytosol. It is found in the cell projection. The protein resides in the axon. The catalysed reaction is an aldehyde + NAD(+) + H2O = a carboxylate + NADH + 2 H(+). It catalyses the reaction all-trans-retinal + NAD(+) + H2O = all-trans-retinoate + NADH + 2 H(+). It carries out the reaction 9-cis-retinal + NAD(+) + H2O = 9-cis-retinoate + NADH + 2 H(+). The enzyme catalyses 11-cis-retinal + NAD(+) + H2O = 11-cis-retinoate + NADH + 2 H(+). The catalysed reaction is 13-cis-retinal + NAD(+) + H2O = 13-cis-retinoate + NADH + 2 H(+). It catalyses the reaction 3-deoxyglucosone + NAD(+) + H2O = 2-dehydro-3-deoxy-D-gluconate + NADH + 2 H(+). It carries out the reaction (E)-4-hydroxynon-2-enal + NAD(+) + H2O = (E)-4-hydroxynon-2-enoate + NADH + 2 H(+). The enzyme catalyses malonaldehyde + NAD(+) + H2O = 3-oxopropanoate + NADH + 2 H(+). The catalysed reaction is hexanal + NAD(+) + H2O = hexanoate + NADH + 2 H(+). It catalyses the reaction propanal + NAD(+) + H2O = propanoate + NADH + 2 H(+). It carries out the reaction acetaldehyde + NAD(+) + H2O = acetate + NADH + 2 H(+). The enzyme catalyses benzaldehyde + NAD(+) + H2O = benzoate + NADH + 2 H(+). The catalysed reaction is 4-aminobutanal + NAD(+) + H2O = 4-aminobutanoate + NADH + 2 H(+). It functions in the pathway cofactor metabolism; retinol metabolism. In terms of biological role, cytosolic dehydrogenase that catalyzes the irreversible oxidation of a wide range of aldehydes to their corresponding carboxylic acid. Functions downstream of retinol dehydrogenases and catalyzes the oxidation of retinaldehyde into retinoic acid, the second step in the oxidation of retinol/vitamin A into retinoic acid. This pathway is crucial to control the levels of retinol and retinoic acid, two important molecules which excess can be teratogenic and cytotoxic. Also oxidizes aldehydes resulting from lipid peroxidation like (E)-4-hydroxynon-2-enal/HNE, malonaldehyde and hexanal that form protein adducts and are highly cytotoxic. By participating for instance to the clearance of (E)-4-hydroxynon-2-enal/HNE in the lens epithelium prevents the formation of HNE-protein adducts and lens opacification. Also functions downstream of fructosamine-3-kinase in the fructosamine degradation pathway by catalyzing the oxidation of 3-deoxyglucosone, the carbohydrate product of fructosamine 3-phosphate decomposition, which is itself a potent glycating agent that may react with lysine and arginine side-chains of proteins. Also has an aminobutyraldehyde dehydrogenase activity and is probably part of an alternative pathway for the biosynthesis of GABA/4-aminobutanoate in midbrain, thereby playing a role in GABAergic synaptic transmission. The sequence is that of Aldehyde dehydrogenase 1A1 from Equus caballus (Horse).